Reading from the N-terminus, the 454-residue chain is Golgi reassembly-stacking protein 2 (454 aa).

Gly2 carries N-myristoyl glycine lipidation. 2 PDZ GRASP-type domains span residues 15-105 and 111-199; these read EGYH…FCSF and NVWH…YGYL. Positions 15–215 are GRASP; it reads EGYHVLRVQE…PFEEGKKISL (201 aa). 2 positions are modified to dimethylated arginine: Arg30 and Arg47. Residues 194–199 are important for membrane binding; sequence IGYGYL. The residue at position 214 (Ser214) is a Phosphoserine. The residue at position 222 (Thr222) is a Phosphothreonine. Thr225 is modified (phosphothreonine; by MAPK). A disordered region spans residues 377–454; it reads EGSSAASAGE…VTDANASGAS (78 aa). Ser411 carries the phosphoserine modification. Thr435 is subject to Phosphothreonine. A phosphoserine mark is found at Ser443 and Ser451.

This sequence belongs to the GORASP family. Homodimer. Homooligomer. ER stress induces phosphorylation-dependent monomerization. Interacts with BLZF1/Golgin 45. Identified in a complex with RAB2 and GORASP2. Interacts with JAM2 and JAM3. Interacts with members of the p24 cargo receptors. Interacts with CNIH1 and the cytoplasmic domain of transmembrane TGFA, prior its transit in the trans-Golgi. Interacts with KCTD5. Interacts with TMED2 and TMED3. Interacts with SEC16A in response to ER stress. Interacts (via PDZ GRASP-type 1 domain) with core-glycosylated CFTR in response to ER stress. Myristoylated. Myristoylation is essential for the Golgi targeting. Post-translationally, palmitoylated. In terms of processing, phosphorylated in mitotic cells. ER stress-induced phosphorylation at Ser-443 induces monomerization and subsequent relocalization from Golgi to ER which is essential for mediating unconventional (ER/Golgi-independent) trafficking of CFTR to the cell membrane. Detected in lung, brain, heart, liver and testis.

The protein resides in the golgi apparatus membrane. Its subcellular location is the endoplasmic reticulum membrane. It localises to the golgi apparatus. Its function is as follows. Key structural protein of the Golgi apparatus. The membrane cisternae of the Golgi apparatus adhere to each other to form stacks, which are aligned side by side to form the Golgi ribbon. Acting in concert with GORASP1/GRASP65, is required for the formation and maintenance of the Golgi ribbon, and may be dispensable for the formation of stacks. However, other studies suggest that GORASP2 plays a role in the assembly and membrane stacking of the Golgi cisternae, and in the process by which Golgi stacks reform after breakdown during mitosis and meiosis. May regulate the intracellular transport and presentation of a defined set of transmembrane proteins, such as transmembrane TGFA. Required for normal acrosome formation during spermiogenesis and normal male fertility, probably by promoting colocalization of JAM2 and JAM3 at contact sites between germ cells and Sertoli cells. Mediates ER stress-induced unconventional (ER/Golgi-independent) trafficking of core-glycosylated CFTR to cell membrane. In Rattus norvegicus (Rat), this protein is Golgi reassembly-stacking protein 2 (Gorasp2).